The primary structure comprises 121 residues: Acidic phospholipase A2 PLA-1 (121 aa).

Disulfide bonds link C26–C115, C28–C44, C43–C95, C49–C121, C50–C88, C57–C81, and C75–C86. Ca(2+) is bound by residues Y27, G29, and G31. H47 is a catalytic residue. D48 is a binding site for Ca(2+). Residue D89 is part of the active site.

The protein belongs to the phospholipase A2 family. Group II subfamily. D49 sub-subfamily. Requires Ca(2+) as cofactor. As to expression, expressed by the venom gland.

The protein localises to the secreted. It catalyses the reaction a 1,2-diacyl-sn-glycero-3-phosphocholine + H2O = a 1-acyl-sn-glycero-3-phosphocholine + a fatty acid + H(+). Functionally, PLA2 catalyzes the calcium-dependent hydrolysis of the 2-acyl groups in 3-sn-phosphoglycerides. This chain is Acidic phospholipase A2 PLA-1, found in Eristicophis macmahoni (Leaf-nosed viper).